The sequence spans 77 residues: Large ribosomal subunit protein bL28 (77 aa).

The segment at 1 to 20 is disordered; it reads MSRVCQVTGKGPVTGNNISH.

Belongs to the bacterial ribosomal protein bL28 family.

The sequence is that of Large ribosomal subunit protein bL28 from Pseudomonas fluorescens (strain Pf0-1).